A 356-amino-acid polypeptide reads, in one-letter code: tRNA-specific 2-thiouridylase MnmA 1 (356 aa).

ATP contacts are provided by residues 8–15 and Met34; that span reads GMSGGVDS. Cys103 (nucleophile) is an active-site residue. Residues Cys103 and Cys199 are joined by a disulfide bond. Gly127 is a binding site for ATP. The tract at residues 149–151 is interaction with tRNA; sequence KDQ. Cys199 functions as the Cysteine persulfide intermediate in the catalytic mechanism. The interval 305–306 is interaction with tRNA; sequence RY.

Belongs to the MnmA/TRMU family.

The protein resides in the cytoplasm. It carries out the reaction S-sulfanyl-L-cysteinyl-[protein] + uridine(34) in tRNA + AH2 + ATP = 2-thiouridine(34) in tRNA + L-cysteinyl-[protein] + A + AMP + diphosphate + H(+). In terms of biological role, catalyzes the 2-thiolation of uridine at the wobble position (U34) of tRNA, leading to the formation of s(2)U34. The sequence is that of tRNA-specific 2-thiouridylase MnmA 1 from Clostridium botulinum (strain Langeland / NCTC 10281 / Type F).